A 513-amino-acid chain; its full sequence is ATP synthase subunit alpha 1 (513 aa).

Position 169-176 (169-176 (GDRQTGKT)) interacts with ATP.

Belongs to the ATPase alpha/beta chains family. F-type ATPases have 2 components, CF(1) - the catalytic core - and CF(0) - the membrane proton channel. CF(1) has five subunits: alpha(3), beta(3), gamma(1), delta(1), epsilon(1). CF(0) has three main subunits: a(1), b(2) and c(9-12). The alpha and beta chains form an alternating ring which encloses part of the gamma chain. CF(1) is attached to CF(0) by a central stalk formed by the gamma and epsilon chains, while a peripheral stalk is formed by the delta and b chains.

It is found in the cell inner membrane. It catalyses the reaction ATP + H2O + 4 H(+)(in) = ADP + phosphate + 5 H(+)(out). Functionally, produces ATP from ADP in the presence of a proton gradient across the membrane. The alpha chain is a regulatory subunit. The polypeptide is ATP synthase subunit alpha 1 (Nitrosospira multiformis (strain ATCC 25196 / NCIMB 11849 / C 71)).